The chain runs to 106 residues: Large ribosomal subunit protein eL42 (106 aa).

The interval tyrosine 26–lysine 53 is disordered.

Belongs to the eukaryotic ribosomal protein eL42 family. As to quaternary structure, component of the large ribosomal subunit.

It is found in the cytoplasm. Its function is as follows. Component of the large ribosomal subunit. The ribosome is a large ribonucleoprotein complex responsible for the synthesis of proteins in the cell. The protein is Large ribosomal subunit protein eL42 (rpl36a) of Danio rerio (Zebrafish).